Consider the following 71-residue polypeptide: Small ribosomal subunit protein bS21 (71 aa).

It belongs to the bacterial ribosomal protein bS21 family.

The polypeptide is Small ribosomal subunit protein bS21 (Buchnera aphidicola subsp. Cinara cedri (strain Cc)).